Reading from the N-terminus, the 284-residue chain is Orotidine 5'-phosphate decarboxylase (284 aa).

Lysine 95 acts as the Proton donor in catalysis.

This sequence belongs to the OMP decarboxylase family. Type 2 subfamily.

The enzyme catalyses orotidine 5'-phosphate + H(+) = UMP + CO2. The protein operates within pyrimidine metabolism; UMP biosynthesis via de novo pathway; UMP from orotate: step 2/2. This chain is Orotidine 5'-phosphate decarboxylase, found in Leptothrix cholodnii (strain ATCC 51168 / LMG 8142 / SP-6) (Leptothrix discophora (strain SP-6)).